A 126-amino-acid chain; its full sequence is Phosphoribosyl-AMP cyclohydrolase (126 aa).

Residue Asp-82 participates in Mg(2+) binding. Cys-83 serves as a coordination point for Zn(2+). Residues Asp-84 and Asp-86 each contribute to the Mg(2+) site. Zn(2+) is bound by residues Cys-99 and Cys-106.

This sequence belongs to the PRA-CH family. As to quaternary structure, homodimer. Requires Mg(2+) as cofactor. Zn(2+) serves as cofactor.

The protein resides in the cytoplasm. It catalyses the reaction 1-(5-phospho-beta-D-ribosyl)-5'-AMP + H2O = 1-(5-phospho-beta-D-ribosyl)-5-[(5-phospho-beta-D-ribosylamino)methylideneamino]imidazole-4-carboxamide. Its pathway is amino-acid biosynthesis; L-histidine biosynthesis; L-histidine from 5-phospho-alpha-D-ribose 1-diphosphate: step 3/9. Its function is as follows. Catalyzes the hydrolysis of the adenine ring of phosphoribosyl-AMP. This Micrococcus luteus (strain ATCC 4698 / DSM 20030 / JCM 1464 / CCM 169 / CCUG 5858 / IAM 1056 / NBRC 3333 / NCIMB 9278 / NCTC 2665 / VKM Ac-2230) (Micrococcus lysodeikticus) protein is Phosphoribosyl-AMP cyclohydrolase.